Consider the following 260-residue polypeptide: Imidazole glycerol phosphate synthase subunit HisF (260 aa).

Active-site residues include Asp11 and Asp130.

The protein belongs to the HisA/HisF family. Heterodimer of HisH and HisF.

It localises to the cytoplasm. The enzyme catalyses 5-[(5-phospho-1-deoxy-D-ribulos-1-ylimino)methylamino]-1-(5-phospho-beta-D-ribosyl)imidazole-4-carboxamide + L-glutamine = D-erythro-1-(imidazol-4-yl)glycerol 3-phosphate + 5-amino-1-(5-phospho-beta-D-ribosyl)imidazole-4-carboxamide + L-glutamate + H(+). It functions in the pathway amino-acid biosynthesis; L-histidine biosynthesis; L-histidine from 5-phospho-alpha-D-ribose 1-diphosphate: step 5/9. IGPS catalyzes the conversion of PRFAR and glutamine to IGP, AICAR and glutamate. The HisF subunit catalyzes the cyclization activity that produces IGP and AICAR from PRFAR using the ammonia provided by the HisH subunit. The sequence is that of Imidazole glycerol phosphate synthase subunit HisF from Psychrobacter cryohalolentis (strain ATCC BAA-1226 / DSM 17306 / VKM B-2378 / K5).